Reading from the N-terminus, the 456-residue chain is uncharacterized protein (456 aa).

In terms of domain architecture, TRAM spans 5 to 63 (LVKKGQQISLKIKRLGINGEGIGYYKKLIIFVPGALPKEEVTATITNVTPKFAEGTLQS). Positions 76, 82, 85, and 165 each coordinate [4Fe-4S] cluster. S-adenosyl-L-methionine is bound by residues Gln289, Tyr318, Asp339, and Asp387. Cys414 serves as the catalytic Nucleophile.

It belongs to the class I-like SAM-binding methyltransferase superfamily. RNA M5U methyltransferase family.

This is an uncharacterized protein from Enterococcus faecalis (strain ATCC 700802 / V583).